A 479-amino-acid chain; its full sequence is Aryl-phospho-beta-D-glucosidase BglA (479 aa).

Glutamate 176 serves as the catalytic Proton donor. Glutamate 377 (nucleophile) is an active-site residue.

The protein belongs to the glycosyl hydrolase 1 family.

The enzyme catalyses 6-phospho-beta-D-glucosyl-(1-&gt;4)-D-glucose + H2O = D-glucose 6-phosphate + D-glucose. Its function is as follows. Catalyzes the hydrolysis of aryl-phospho-beta-D-glucosides such as 4-methylumbelliferyl-phospho-beta-D-glucopyranoside (MUG-P), phosphoarbutin and phosphosalicin. Plays a major role in the utilization of arbutin or salicin as the sole carbon source. BglA and BglH are the major proteins contributing to hydrolysis of MUG-P by extracts of late-exponential-phase or stationary-phase B.subtilis cells. The protein is Aryl-phospho-beta-D-glucosidase BglA (bglA) of Bacillus subtilis (strain 168).